Reading from the N-terminus, the 665-residue chain is MSQTSLHHARLDWNEAGTPVSSEFGDVYFSNDNGLSETRYVFLQQNRLPARFSHHDSDIFVIGETGFGTGLNFLATMAAFLEQAPQSGNGARLHFISFEKYPLTREDLRKALAAWPELATFSQPLIEQWPLPVAGCHRLLFAGGRIRLDLWFGDIKEMLPQVPHPADGLVDAWYLDGFSPAKNPEMWTQALFDGLARLARPHATIATFTCAGFVRRGLIAAGFAMQKVKGHGSKREMLAGERAEKQPQQTIAPWYARPAGRAGEVLIIGGGIASAMTALSLVERGRRVTLLCQDGEPATGASGNRQGALYPLLNGEHDVLSRFYSLAFGFARSRLLALAKRHPVAFSLCGVTQLGYDDKSAAKLAKMAQGPFPPELMQVLSEPEAEQVVGLPCGHGGVSYPQGGWLCPADLTRAAIKEAQASGLLEVVFNTEVVAMAEQADGWQVESRDGRRWQAPNLVVAAGHQLPALIPFAELPLYPVRGQVSHVPTSVSLSKLNTVLCYDGYLTPAHHDHHCIGASYGRNQTDLEFRADEQAQNQARLQACLPQQAWPAEVDVSGNQARVGVRSASRDHLPVVGPVASLAKLADHYAGLQGDQQNAAPLPLHPGLYVLGALGSRGLCSAPLCGELLASEICGDPLPLAADLLEALHPARYWVRKLLKGKPLQ.

Residues 1-243 (MSQTSLHHAR…KREMLAGERA (243 aa)) form a tRNA (mnm(5)s(2)U34)-methyltransferase region. The tract at residues 268-665 (IGGGIASAMT…RKLLKGKPLQ (398 aa)) is FAD-dependent cmnm(5)s(2)U34 oxidoreductase.

This sequence in the N-terminal section; belongs to the methyltransferase superfamily. tRNA (mnm(5)s(2)U34)-methyltransferase family. It in the C-terminal section; belongs to the DAO family. The cofactor is FAD.

Its subcellular location is the cytoplasm. The catalysed reaction is 5-aminomethyl-2-thiouridine(34) in tRNA + S-adenosyl-L-methionine = 5-methylaminomethyl-2-thiouridine(34) in tRNA + S-adenosyl-L-homocysteine + H(+). Functionally, catalyzes the last two steps in the biosynthesis of 5-methylaminomethyl-2-thiouridine (mnm(5)s(2)U) at the wobble position (U34) in tRNA. Catalyzes the FAD-dependent demodification of cmnm(5)s(2)U34 to nm(5)s(2)U34, followed by the transfer of a methyl group from S-adenosyl-L-methionine to nm(5)s(2)U34, to form mnm(5)s(2)U34. The chain is tRNA 5-methylaminomethyl-2-thiouridine biosynthesis bifunctional protein MnmC from Aeromonas hydrophila subsp. hydrophila (strain ATCC 7966 / DSM 30187 / BCRC 13018 / CCUG 14551 / JCM 1027 / KCTC 2358 / NCIMB 9240 / NCTC 8049).